A 278-amino-acid polypeptide reads, in one-letter code: HTH-type transcriptional regulator TsaQ1/TsaQ2 (278 aa).

The region spanning 19–80 (VHSLAKGLEI…PRSRKLAMGA (62 aa)) is the HTH iclR-type domain. The H-T-H motif DNA-binding region spans 40-59 (NQQLVELTGLPKATVSRLTS). The region spanning 95–266 (LQRIARPHME…VQDIQAEMRA (172 aa)) is the IclR-ED domain.

Its function is as follows. Both copies function as additional regulators for the tsa locus, specifically for tsaT. This chain is HTH-type transcriptional regulator TsaQ1/TsaQ2 (tsaQ1), found in Comamonas testosteroni (Pseudomonas testosteroni).